The sequence spans 426 residues: MKQLRLEPINKVQGTINIPGSKSISNRALLLATLAKGTTTLTNLLDSDDIRYMLASLKQLGVNYRLSNDNTVCELEGIGAPLNSEQAQTLFLGNAGTAMRPLCAALTLGHGEFTLTGEPRMEERPIGDLVDALRQLGANVTYLKNDGFPPLTINATGLDAGEVEIAGDLSSQFLTALLMVAPLATGDVNIKIKGELVSKPYIDITIALMAQFGVQVVNHSYERFEIKAGQGYVSPGKVLVEGDASSASYFLAAGAIKGGEVKVTGVGRMSIQGDVKFADVLEKMGADIEWGDDYIISRGSTLKAVDLDMNHIPDAAMTIATAALFATGTTHIRNIYNWRIKETDRLAAMATELRKVGAIVDEGHDYISITPPTKPHTADIDTYNDHRMAMCFSMLAFADCGITINDPDCTSKTFPDYFNQFAALAQ.

3 residues coordinate 3-phosphoshikimate: Lys-22, Ser-23, and Arg-27. Lys-22 is a binding site for phosphoenolpyruvate. Phosphoenolpyruvate contacts are provided by Gly-96 and Arg-124. Ser-170, Ser-171, Gln-172, Ser-198, Asp-314, Asn-337, and Lys-341 together coordinate 3-phosphoshikimate. Position 172 (Gln-172) interacts with phosphoenolpyruvate. The Proton acceptor role is filled by Asp-314. 3 residues coordinate phosphoenolpyruvate: Arg-345, Arg-387, and Lys-412.

Belongs to the EPSP synthase family. As to quaternary structure, monomer.

It is found in the cytoplasm. The catalysed reaction is 3-phosphoshikimate + phosphoenolpyruvate = 5-O-(1-carboxyvinyl)-3-phosphoshikimate + phosphate. It functions in the pathway metabolic intermediate biosynthesis; chorismate biosynthesis; chorismate from D-erythrose 4-phosphate and phosphoenolpyruvate: step 6/7. Catalyzes the transfer of the enolpyruvyl moiety of phosphoenolpyruvate (PEP) to the 5-hydroxyl of shikimate-3-phosphate (S3P) to produce enolpyruvyl shikimate-3-phosphate and inorganic phosphate. In Shewanella sediminis (strain HAW-EB3), this protein is 3-phosphoshikimate 1-carboxyvinyltransferase.